We begin with the raw amino-acid sequence, 118 residues long: Large ribosomal subunit protein bL20c (118 aa).

The protein belongs to the bacterial ribosomal protein bL20 family.

It is found in the plastid. The protein resides in the chloroplast. Binds directly to 23S ribosomal RNA and is necessary for the in vitro assembly process of the 50S ribosomal subunit. It is not involved in the protein synthesizing functions of that subunit. This is Large ribosomal subunit protein bL20c from Adiantum capillus-veneris (Maidenhair fern).